The primary structure comprises 108 residues: Nucleoid-associated protein Rmet_2128 (108 aa).

Residues 86–96 (TTQEKMGSMTS) show a composition bias toward polar residues. The interval 86-108 (TTQEKMGSMTSGLPLPPGFKLPF) is disordered. A compositionally biased stretch (pro residues) spans 99-108 (PLPPGFKLPF).

It belongs to the YbaB/EbfC family. As to quaternary structure, homodimer.

The protein resides in the cytoplasm. The protein localises to the nucleoid. Functionally, binds to DNA and alters its conformation. May be involved in regulation of gene expression, nucleoid organization and DNA protection. The sequence is that of Nucleoid-associated protein Rmet_2128 from Cupriavidus metallidurans (strain ATCC 43123 / DSM 2839 / NBRC 102507 / CH34) (Ralstonia metallidurans).